Here is a 621-residue protein sequence, read N- to C-terminus: tRNA uridine 5-carboxymethylaminomethyl modification enzyme MnmG (621 aa).

9-14 (GGGHAG) is a binding site for FAD. NAD(+) is bound at residue 268–282 (GPRYCPSIEDKINRF).

Belongs to the MnmG family. Homodimer. Heterotetramer of two MnmE and two MnmG subunits. The cofactor is FAD.

The protein localises to the cytoplasm. Functionally, NAD-binding protein involved in the addition of a carboxymethylaminomethyl (cmnm) group at the wobble position (U34) of certain tRNAs, forming tRNA-cmnm(5)s(2)U34. This chain is tRNA uridine 5-carboxymethylaminomethyl modification enzyme MnmG, found in Campylobacter fetus subsp. fetus (strain 82-40).